We begin with the raw amino-acid sequence, 479 residues long: Aspartyl/glutamyl-tRNA(Asn/Gln) amidotransferase subunit B (479 aa).

The protein belongs to the GatB/GatE family. GatB subfamily. In terms of assembly, heterotrimer of A, B and C subunits.

It catalyses the reaction L-glutamyl-tRNA(Gln) + L-glutamine + ATP + H2O = L-glutaminyl-tRNA(Gln) + L-glutamate + ADP + phosphate + H(+). It carries out the reaction L-aspartyl-tRNA(Asn) + L-glutamine + ATP + H2O = L-asparaginyl-tRNA(Asn) + L-glutamate + ADP + phosphate + 2 H(+). Its function is as follows. Allows the formation of correctly charged Asn-tRNA(Asn) or Gln-tRNA(Gln) through the transamidation of misacylated Asp-tRNA(Asn) or Glu-tRNA(Gln) in organisms which lack either or both of asparaginyl-tRNA or glutaminyl-tRNA synthetases. The reaction takes place in the presence of glutamine and ATP through an activated phospho-Asp-tRNA(Asn) or phospho-Glu-tRNA(Gln). This is Aspartyl/glutamyl-tRNA(Asn/Gln) amidotransferase subunit B from Deinococcus radiodurans (strain ATCC 13939 / DSM 20539 / JCM 16871 / CCUG 27074 / LMG 4051 / NBRC 15346 / NCIMB 9279 / VKM B-1422 / R1).